The primary structure comprises 417 residues: Actin-like protein 7B (417 aa).

The interval 1-39 is disordered; the sequence is MATKNNPSPKPMGTAQGDPGEAGTLPAPEAGIRDTGSTQ. Position 8 is a phosphoserine (Ser-8).

It belongs to the actin family.

It is found in the cytoplasm. It localises to the cytoskeleton. In Rattus norvegicus (Rat), this protein is Actin-like protein 7B (Actl7b).